A 379-amino-acid chain; its full sequence is Chaperone protein DnaJ (379 aa).

The J domain occupies 5–70 (DYYETLGCDR…QKRAAYDRFG (66 aa)). Residues 134-212 (GKTAQIKIPT…CGGAGRVTRE (79 aa)) form a CR-type zinc finger. Zn(2+) is bound by residues Cys-147, Cys-150, Cys-164, Cys-167, Cys-186, Cys-189, Cys-200, and Cys-203. CXXCXGXG motif repeat units lie at residues 147–154 (CETCSGTG), 164–171 (CRMCGGAG), 186–193 (CPNCQGRG), and 200–207 (CSDCGGAG).

It belongs to the DnaJ family. In terms of assembly, homodimer. The cofactor is Zn(2+).

The protein localises to the cytoplasm. Participates actively in the response to hyperosmotic and heat shock by preventing the aggregation of stress-denatured proteins and by disaggregating proteins, also in an autonomous, DnaK-independent fashion. Unfolded proteins bind initially to DnaJ; upon interaction with the DnaJ-bound protein, DnaK hydrolyzes its bound ATP, resulting in the formation of a stable complex. GrpE releases ADP from DnaK; ATP binding to DnaK triggers the release of the substrate protein, thus completing the reaction cycle. Several rounds of ATP-dependent interactions between DnaJ, DnaK and GrpE are required for fully efficient folding. Also involved, together with DnaK and GrpE, in the DNA replication of plasmids through activation of initiation proteins. The protein is Chaperone protein DnaJ of Xanthobacter autotrophicus (strain ATCC BAA-1158 / Py2).